Consider the following 910-residue polypeptide: Translation factor GUF1 homolog, mitochondrial (910 aa).

The tract at residues Arg126–Gln188 is disordered. Residues Gln189–Ala366 form the tr-type G domain. GTP contacts are provided by residues Ala198–Ser205, Asp259–His263, and Asn313–Asp316. Positions Gly639–Ile683 are disordered. Over residues Asp646–Gly667 the composition is skewed to low complexity.

This sequence belongs to the TRAFAC class translation factor GTPase superfamily. Classic translation factor GTPase family. LepA subfamily.

It localises to the mitochondrion inner membrane. It catalyses the reaction GTP + H2O = GDP + phosphate + H(+). In terms of biological role, promotes mitochondrial protein synthesis. May act as a fidelity factor of the translation reaction, by catalyzing a one-codon backward translocation of tRNAs on improperly translocated ribosomes. Binds to mitochondrial ribosomes in a GTP-dependent manner. This is Translation factor GUF1 homolog, mitochondrial from Plasmodium vivax (strain Salvador I).